Reading from the N-terminus, the 66-residue chain is Photosystem II reaction center protein J (66 aa).

A helical transmembrane segment spans residues 37–57 (LWLVATAGGMAVLFVVGLFFY).

The protein belongs to the PsbJ family. In terms of assembly, PSII is composed of 1 copy each of membrane proteins PsbA, PsbB, PsbC, PsbD, PsbE, PsbF, PsbH, PsbI, PsbJ, PsbK, PsbL, PsbM, PsbT, PsbX, PsbY, PsbZ, Psb30/Ycf12, peripheral proteins PsbO, CyanoQ (PsbQ), PsbU, PsbV and a large number of cofactors. It forms dimeric complexes.

The protein resides in the cellular thylakoid membrane. Its function is as follows. One of the components of the core complex of photosystem II (PSII). PSII is a light-driven water:plastoquinone oxidoreductase that uses light energy to abstract electrons from H(2)O, generating O(2) and a proton gradient subsequently used for ATP formation. It consists of a core antenna complex that captures photons, and an electron transfer chain that converts photonic excitation into a charge separation. The polypeptide is Photosystem II reaction center protein J (Synechococcus sp. (strain WH7803)).